The sequence spans 230 residues: Flagellar L-ring protein (230 aa).

An N-terminal signal peptide occupies residues 1–15 (MSRLPSLSRPCLAIA). Cysteine 16 carries the N-palmitoyl cysteine lipid modification. Residue cysteine 16 is the site of S-diacylglycerol cysteine attachment.

It belongs to the FlgH family. In terms of assembly, the basal body constitutes a major portion of the flagellar organelle and consists of four rings (L,P,S, and M) mounted on a central rod.

The protein localises to the cell outer membrane. It localises to the bacterial flagellum basal body. Assembles around the rod to form the L-ring and probably protects the motor/basal body from shearing forces during rotation. In Xanthomonas axonopodis pv. citri (strain 306), this protein is Flagellar L-ring protein.